An 802-amino-acid polypeptide reads, in one-letter code: Threonine--tRNA ligase 2, cytoplasmic (802 aa).

Ala-2 bears the N-acetylalanine mark. Coiled-coil stretches lie at residues 3 to 23 and 76 to 96; these read AEAL…EDIR and AEER…AQEA. Positions 86-98 are enriched in low complexity; sequence ESAELEAAQEAGA. The tract at residues 86 to 123 is disordered; the sequence is ESAELEAAQEAGAQPPPSQSQDKDMKKKKMKESEADSE. The span at 106-123 shows a compositional bias: basic and acidic residues; sequence QDKDMKKKKMKESEADSE. The TGS domain occupies 157 to 222; that stretch reads DTSNIITVRV…EGDSSLELLT (66 aa). A Phosphoserine modification is found at Ser-453. A Nuclear localization signal motif is present at residues 786–792; that stretch reads KLKNLRK.

This sequence belongs to the class-II aminoacyl-tRNA synthetase family. As to quaternary structure, may be a component of the multisynthetase complex (MSC), a large multi-subunit complex which contains at least eight different aminoacyl-tRNA synthetases plus three auxillary subunits AIMP1, AIMP2 and EEF1E1. Interacts with the MSC components EPRS1, AIMP1, AIMP2 and KARS1.

The protein localises to the cytoplasm. It is found in the nucleus. It carries out the reaction tRNA(Thr) + L-threonine + ATP = L-threonyl-tRNA(Thr) + AMP + diphosphate + H(+). Its function is as follows. Catalyzes the attachment of threonine to tRNA(Thr) in a two-step reaction: threonine is first activated by ATP to form Thr-AMP and then transferred to the acceptor end of tRNA(Thr). Also edits incorrectly charged tRNA(Thr) via its editing domain, at the post-transfer stage. The sequence is that of Threonine--tRNA ligase 2, cytoplasmic from Homo sapiens (Human).